The primary structure comprises 441 residues: Ribosomal protein uS12 methylthiotransferase RimO (441 aa).

The MTTase N-terminal domain occupies 7-117 (PKISFVSLGC…VLEAVHRAKP (111 aa)). [4Fe-4S] cluster-binding residues include cysteine 16, cysteine 52, cysteine 81, cysteine 148, cysteine 152, and cysteine 155. A Radical SAM core domain is found at 134–371 (LTPRHYAYLK…MARQQVISAR (238 aa)). In terms of domain architecture, TRAM spans 374 to 440 (KRKVGTRQQI…AYDLHGTVAG (67 aa)).

It belongs to the methylthiotransferase family. RimO subfamily. [4Fe-4S] cluster serves as cofactor.

It is found in the cytoplasm. The catalysed reaction is L-aspartate(89)-[ribosomal protein uS12]-hydrogen + (sulfur carrier)-SH + AH2 + 2 S-adenosyl-L-methionine = 3-methylsulfanyl-L-aspartate(89)-[ribosomal protein uS12]-hydrogen + (sulfur carrier)-H + 5'-deoxyadenosine + L-methionine + A + S-adenosyl-L-homocysteine + 2 H(+). Catalyzes the methylthiolation of an aspartic acid residue of ribosomal protein uS12. This Rhodopseudomonas palustris (strain BisB5) protein is Ribosomal protein uS12 methylthiotransferase RimO.